We begin with the raw amino-acid sequence, 261 residues long: Calbindin (261 aa).

Alanine 2 is modified (N-acetylalanine). The interval 2-7 (AESHLQ) is interaction with RANBP9. EF-hand domains are found at residues 11–46 (ITAS…LQQA), 53–88 (ELSP…EENF), 98–133 (KSCE…LLEK), 142–177 (KLAE…QENF), and 186–221 (MCGK…LCEK). Positions 24, 26, 28, 30, and 35 each coordinate Ca(2+). 14 residues coordinate Ca(2+): aspartate 111, aspartate 113, serine 115, glutamate 122, aspartate 155, asparagine 157, aspartate 159, lysine 161, glutamate 166, aspartate 199, aspartate 201, asparagine 203, tyrosine 205, and glutamate 210.

This sequence belongs to the calbindin family. As to quaternary structure, interacts with RANBP9.

Its function is as follows. Buffers cytosolic calcium. May stimulate a membrane Ca(2+)-ATPase and a 3',5'-cyclic nucleotide phosphodiesterase. The protein is Calbindin (CALB1) of Homo sapiens (Human).